A 235-amino-acid polypeptide reads, in one-letter code: uncharacterized protein (235 aa).

The region spanning Leu-82–Pro-221 is the N-acetyltransferase domain.

Belongs to the acetyltransferase family.

It localises to the golgi apparatus membrane. The protein resides in the endoplasmic reticulum membrane. This is an uncharacterized protein from Schizosaccharomyces pombe (strain 972 / ATCC 24843) (Fission yeast).